Here is a 520-residue protein sequence, read N- to C-terminus: Hydroxymethylglutaryl-CoA synthase, cytoplasmic (520 aa).

At S4 the chain carries Phosphoserine. 2 residues coordinate (3S)-3-hydroxy-3-methylglutaryl-CoA: D43 and A44. 44–46 contacts CoA; sequence AGK. Position 46 is an N6-acetyllysine (K46). E95 (proton donor/acceptor) is an active-site residue. Residues C129, N167, T171, S221, and H264 each coordinate (3S)-3-hydroxy-3-methylglutaryl-CoA. C129 (acyl-thioester intermediate) is an active-site residue. N167 provides a ligand contact to CoA. S221 contributes to the CoA binding site. H264 serves as the catalytic Proton donor/acceptor. 2 residues coordinate CoA: K269 and K273. Residues K273, N343, and S377 each coordinate (3S)-3-hydroxy-3-methylglutaryl-CoA. K273 carries the post-translational modification N6-acetyllysine. Positions 488–520 are disordered; the sequence is TATEHIPSPAKKVPRLPATSAESESAVISNGEH. Residues S495 and S516 each carry the phosphoserine modification. Over residues 507–520 the composition is skewed to polar residues; it reads SAESESAVISNGEH.

The protein belongs to the thiolase-like superfamily. HMG-CoA synthase family. Homodimer.

The protein localises to the cytoplasm. It catalyses the reaction acetoacetyl-CoA + acetyl-CoA + H2O = (3S)-3-hydroxy-3-methylglutaryl-CoA + CoA + H(+). It participates in metabolic intermediate biosynthesis; (R)-mevalonate biosynthesis; (R)-mevalonate from acetyl-CoA: step 2/3. Catalyzes the condensation of acetyl-CoA with acetoacetyl-CoA to form HMG-CoA, which is converted by HMG-CoA reductase (HMGCR) into mevalonate, a precursor for cholesterol synthesis. This chain is Hydroxymethylglutaryl-CoA synthase, cytoplasmic, found in Mus musculus (Mouse).